A 349-amino-acid polypeptide reads, in one-letter code: Aspartate carbamoyltransferase catalytic subunit (349 aa).

Residues R59 and T60 each contribute to the carbamoyl phosphate site. Residue K87 coordinates L-aspartate. Carbamoyl phosphate contacts are provided by R109, H142, and Q145. R182 and R253 together coordinate L-aspartate. The carbamoyl phosphate site is built by G294 and P295.

The protein belongs to the aspartate/ornithine carbamoyltransferase superfamily. ATCase family. As to quaternary structure, heterododecamer (2C3:3R2) of six catalytic PyrB chains organized as two trimers (C3), and six regulatory PyrI chains organized as three dimers (R2).

The enzyme catalyses carbamoyl phosphate + L-aspartate = N-carbamoyl-L-aspartate + phosphate + H(+). Its pathway is pyrimidine metabolism; UMP biosynthesis via de novo pathway; (S)-dihydroorotate from bicarbonate: step 2/3. In terms of biological role, catalyzes the condensation of carbamoyl phosphate and aspartate to form carbamoyl aspartate and inorganic phosphate, the committed step in the de novo pyrimidine nucleotide biosynthesis pathway. This is Aspartate carbamoyltransferase catalytic subunit from Synechococcus sp. (strain CC9902).